Consider the following 247-residue polypeptide: Lipoprotein-releasing system ATP-binding protein LolD 2 (247 aa).

The region spanning 19 to 247 (LEARKLVKSY…QDGRLQACGG (229 aa)) is the ABC transporter domain. 56–63 (GASGSGKT) contributes to the ATP binding site.

The protein belongs to the ABC transporter superfamily. Lipoprotein translocase (TC 3.A.1.125) family. The complex is composed of two ATP-binding proteins (LolD) and two transmembrane proteins (LolC and LolE).

Its subcellular location is the cell inner membrane. In terms of biological role, part of the ABC transporter complex LolCDE involved in the translocation of mature outer membrane-directed lipoproteins, from the inner membrane to the periplasmic chaperone, LolA. Responsible for the formation of the LolA-lipoprotein complex in an ATP-dependent manner. This chain is Lipoprotein-releasing system ATP-binding protein LolD 2, found in Chlorobaculum tepidum (strain ATCC 49652 / DSM 12025 / NBRC 103806 / TLS) (Chlorobium tepidum).